Consider the following 392-residue polypeptide: DNA-directed RNA polymerase subunit Rpo1C (392 aa).

The protein belongs to the RNA polymerase beta' chain family. Part of the RNA polymerase complex.

The protein resides in the cytoplasm. It catalyses the reaction RNA(n) + a ribonucleoside 5'-triphosphate = RNA(n+1) + diphosphate. Its function is as follows. DNA-dependent RNA polymerase (RNAP) catalyzes the transcription of DNA into RNA using the four ribonucleoside triphosphates as substrates. Forms part of the jaw domain. The chain is DNA-directed RNA polymerase subunit Rpo1C from Saccharolobus islandicus (strain Y.N.15.51 / Yellowstone #2) (Sulfolobus islandicus).